The following is a 550-amino-acid chain: Hydroxylamine reductase (550 aa).

Cys-3, Cys-6, Cys-18, and Cys-25 together coordinate [2Fe-2S] cluster. Hybrid [4Fe-2O-2S] cluster-binding residues include His-249, Glu-273, Cys-317, Cys-405, Cys-433, Cys-458, Glu-492, and Lys-494. At Cys-405 the chain carries Cysteine persulfide.

It belongs to the HCP family. The cofactor is [2Fe-2S] cluster. Requires hybrid [4Fe-2O-2S] cluster as cofactor.

The protein localises to the cytoplasm. It carries out the reaction A + NH4(+) + H2O = hydroxylamine + AH2 + H(+). In terms of biological role, catalyzes the reduction of hydroxylamine to form NH(3) and H(2)O. The sequence is that of Hydroxylamine reductase from Escherichia coli (strain SE11).